We begin with the raw amino-acid sequence, 501 residues long: Aluminum-activated malate transporter 2 (501 aa).

6 consecutive transmembrane segments (helical) span residues 22–42, 52–72, 78–98, 101–121, 130–150, and 166–186; these read VVHA…YYYQ, AMWA…ATLG, AVAT…ASLS, TVEP…STFV, RYDY…VSGF, and VIMG…VWAG. Residues 398-425 form a disordered region; that stretch reads FKNKKKPSKSNSGSIGQAMPNKSHDDDD.

Belongs to the aromatic acid exporter (TC 2.A.85) family.

It localises to the membrane. Malate transporter. This is Aluminum-activated malate transporter 2 (ALMT2) from Arabidopsis thaliana (Mouse-ear cress).